Reading from the N-terminus, the 474-residue chain is MNFQTTIGLEVHVELKTNSKIYSPSPVEYGDQPNANTNVIDWGYPGVLPSLNKGVVRDGIMAGLALHAQIAHHMHFDRKNYFYPDNPKAYQITQSDTPIAHDGWIEIEVNGKKKKIGIKEMHIEEDAGKNTHTSKYSYVDLNRQGTPLIEIVSKPDIASPEEAVAYLEALRQRIQFTGISDVKMEEGSMRVDTNISIRPIGSDKFGTKTEMKNINSFNYVRKALAFEEKRHQKVLMAGGHIGQETRRYDEATGETILMRTKEGSDDYRYFPEPDLPPVNVSDEWISEIESEMPEMPGERREHYVKDLGLTDYDAMVLTQTKEMSDFFEEAVKDGGDPKRVANYLMNDVNSYLNDKQVDLQDTKLTPSNLAGMVKLIEDGTISSKMAKKVFKGILDGEEPNAYAKEHGLVQLSDPAQLQPIVDEVLDNNEQSIEDFKNGKDRAVGYLMGQIMKQTRGKANPQVVTQLLMKSLKAK.

Belongs to the GatB/GatE family. GatB subfamily. As to quaternary structure, heterotrimer of A, B and C subunits.

It catalyses the reaction L-glutamyl-tRNA(Gln) + L-glutamine + ATP + H2O = L-glutaminyl-tRNA(Gln) + L-glutamate + ADP + phosphate + H(+). The catalysed reaction is L-aspartyl-tRNA(Asn) + L-glutamine + ATP + H2O = L-asparaginyl-tRNA(Asn) + L-glutamate + ADP + phosphate + 2 H(+). Its function is as follows. Allows the formation of correctly charged Asn-tRNA(Asn) or Gln-tRNA(Gln) through the transamidation of misacylated Asp-tRNA(Asn) or Glu-tRNA(Gln) in organisms which lack either or both of asparaginyl-tRNA or glutaminyl-tRNA synthetases. The reaction takes place in the presence of glutamine and ATP through an activated phospho-Asp-tRNA(Asn) or phospho-Glu-tRNA(Gln). This Limosilactobacillus reuteri (strain DSM 20016) (Lactobacillus reuteri) protein is Aspartyl/glutamyl-tRNA(Asn/Gln) amidotransferase subunit B.